Consider the following 75-residue polypeptide: Small integral membrane protein 15 (75 aa).

The helical transmembrane segment at 21 to 41 (YGFLITVLLALTPLFLASAVL) threads the bilayer. Residues 49–75 (IEAKERDQKKKQKRQENIAKAKRTKKD) are a coiled coil. Basic and acidic residues predominate over residues 52-67 (KERDQKKKQKRQENIA). Residues 52 to 75 (KERDQKKKQKRQENIAKAKRTKKD) form a disordered region.

Belongs to the SMIM15 family.

It localises to the membrane. This Xenopus laevis (African clawed frog) protein is Small integral membrane protein 15 (smim15).